Consider the following 107-residue polypeptide: Nucleoid-associated protein Daro_0807 (107 aa).

It belongs to the YbaB/EbfC family. As to quaternary structure, homodimer.

The protein resides in the cytoplasm. The protein localises to the nucleoid. Binds to DNA and alters its conformation. May be involved in regulation of gene expression, nucleoid organization and DNA protection. The sequence is that of Nucleoid-associated protein Daro_0807 from Dechloromonas aromatica (strain RCB).